The primary structure comprises 271 residues: Autophagy-related protein 5 (271 aa).

Residue Lys145 forms a Glycyl lysine isopeptide (Lys-Gly) (interchain with G-Cter in ATG12) linkage.

This sequence belongs to the ATG5 family. Conjugated with ATG12. Interacts with ATG10. The ATG5-ATG12 conjugate forms a complex with several units of ATG16. The ATG12-ATG5 conjugate also associates with ATG3. Post-translationally, conjugated to ATG12; which is essential for autophagy. Conjugation with ATG12 involves ATG7 as an E1-like activating enzyme and ATG10 as an E2-like conjugating enzyme.

Its subcellular location is the preautophagosomal structure membrane. Its function is as follows. Involved in cytoplasm to vacuole transport (Cvt) and autophagic vesicle formation. Autophagy is essential for maintenance of amino acid levels and protein synthesis under nitrogen starvation. Required for selective autophagic degradation of the nucleus (nucleophagy). Also required for mitophagy, which eliminates defective or superfluous mitochondria in order to fulfill cellular energy requirements and prevent excess ROS production. Conjugation with ATG12, through a ubiquitin-like conjugating system involving ATG7 as an E1-like activating enzyme and ATG10 as an E2-like conjugating enzyme, is essential for its function. The ATG12-ATG5 conjugate acts as an E3-like enzyme which is required for lipidation of ATG8 and ATG8 association to the vesicle membranes. ATG12-ATG5 rearranges the ATG3 catalytic center and enhances its E2 activity. In Kluyveromyces marxianus (strain DMKU3-1042 / BCC 29191 / NBRC 104275) (Yeast), this protein is Autophagy-related protein 5.